The chain runs to 464 residues: MREKTPKQIVDLLDKYIVGQNEAKKSVAIALYNRYRRTQLPEDVQKDITPKNILMAGPTGVGKTEIARRLADIVDAPFVKVEATKFTEVGYVGRDVESMVRDLANEAVRIVEKEEFVKVESQAIRQANKTLVRLLVPGVKRNNRQNQMQQMQEMMQSLLAGGGMPEETEEVTDEIRNQRLSVAEKLDRGLLENEEVTIEVEQAPKANPMGDMMGQMGMDMSSMLGDMLPKKKVKRTLPVGQARKLLVQEEEKKLVNYDDIYQKAMDRAGQSGIIFIDEIDKITAADKRNSAGVSREGVQRDILPIVEGSTVSTKYGPLSTDHILFIAAGAFAESKPSDLIPELQGRFPIRVELNALTKDDFVRILKDPQNSLLKQYIALLKADGVDLVFTAEAVDKIAEIAFEVNQGTDNIGARRLATILEKLLEEVLYEGPDMEMGQITITQAYVEQKLSDIVKNKDLTKFIL.

Residues V18, 60–65, D277, E342, and R414 contribute to the ATP site; that span reads GVGKTE.

This sequence belongs to the ClpX chaperone family. HslU subfamily. In terms of assembly, a double ring-shaped homohexamer of HslV is capped on each side by a ring-shaped HslU homohexamer. The assembly of the HslU/HslV complex is dependent on binding of ATP.

The protein localises to the cytoplasm. Its function is as follows. ATPase subunit of a proteasome-like degradation complex; this subunit has chaperone activity. The binding of ATP and its subsequent hydrolysis by HslU are essential for unfolding of protein substrates subsequently hydrolyzed by HslV. HslU recognizes the N-terminal part of its protein substrates and unfolds these before they are guided to HslV for hydrolysis. The sequence is that of ATP-dependent protease ATPase subunit HslU from Lactobacillus delbrueckii subsp. bulgaricus (strain ATCC 11842 / DSM 20081 / BCRC 10696 / JCM 1002 / NBRC 13953 / NCIMB 11778 / NCTC 12712 / WDCM 00102 / Lb 14).